A 72-amino-acid polypeptide reads, in one-letter code: UPF0270 protein Ent638_3781 (72 aa).

Belongs to the UPF0270 family.

This chain is UPF0270 protein Ent638_3781, found in Enterobacter sp. (strain 638).